We begin with the raw amino-acid sequence, 424 residues long: 3-phosphoshikimate 1-carboxyvinyltransferase (424 aa).

3-phosphoshikimate-binding residues include lysine 21, serine 22, and arginine 26. Residue lysine 21 coordinates phosphoenolpyruvate. Phosphoenolpyruvate-binding residues include glycine 92 and arginine 120. The 3-phosphoshikimate site is built by serine 163, serine 164, glutamine 165, serine 191, aspartate 306, and lysine 333. Glutamine 165 is a phosphoenolpyruvate binding site. Residue aspartate 306 is the Proton acceptor of the active site. The phosphoenolpyruvate site is built by arginine 337, arginine 379, and lysine 405.

This sequence belongs to the EPSP synthase family. In terms of assembly, monomer.

Its subcellular location is the cytoplasm. The catalysed reaction is 3-phosphoshikimate + phosphoenolpyruvate = 5-O-(1-carboxyvinyl)-3-phosphoshikimate + phosphate. The protein operates within metabolic intermediate biosynthesis; chorismate biosynthesis; chorismate from D-erythrose 4-phosphate and phosphoenolpyruvate: step 6/7. Functionally, catalyzes the transfer of the enolpyruvyl moiety of phosphoenolpyruvate (PEP) to the 5-hydroxyl of shikimate-3-phosphate (S3P) to produce enolpyruvyl shikimate-3-phosphate and inorganic phosphate. This chain is 3-phosphoshikimate 1-carboxyvinyltransferase, found in Clostridium perfringens (strain SM101 / Type A).